We begin with the raw amino-acid sequence, 352 residues long: tRNA-specific 2-thiouridylase MnmA (352 aa).

Residues 7–14 (GLSGGVDS) and leucine 33 each bind ATP. Residue cysteine 94 is the Nucleophile of the active site. Cysteine 94 and cysteine 193 are oxidised to a cystine. Residue glycine 119 participates in ATP binding. The interaction with tRNA stretch occupies residues 143-145 (KDQ). The Cysteine persulfide intermediate role is filled by cysteine 193. The segment at 298 to 299 (RY) is interaction with tRNA.

It belongs to the MnmA/TRMU family.

It is found in the cytoplasm. The enzyme catalyses S-sulfanyl-L-cysteinyl-[protein] + uridine(34) in tRNA + AH2 + ATP = 2-thiouridine(34) in tRNA + L-cysteinyl-[protein] + A + AMP + diphosphate + H(+). Its function is as follows. Catalyzes the 2-thiolation of uridine at the wobble position (U34) of tRNA, leading to the formation of s(2)U34. The polypeptide is tRNA-specific 2-thiouridylase MnmA (Microcystis aeruginosa (strain NIES-843 / IAM M-2473)).